Consider the following 188-residue polypeptide: Elongation factor P (188 aa).

The protein belongs to the elongation factor P family.

The protein resides in the cytoplasm. Its pathway is protein biosynthesis; polypeptide chain elongation. In terms of biological role, involved in peptide bond synthesis. Stimulates efficient translation and peptide-bond synthesis on native or reconstituted 70S ribosomes in vitro. Probably functions indirectly by altering the affinity of the ribosome for aminoacyl-tRNA, thus increasing their reactivity as acceptors for peptidyl transferase. The protein is Elongation factor P of Rhodopseudomonas palustris (strain BisA53).